The sequence spans 289 residues: Diaminopimelate epimerase (289 aa).

Substrate is bound by residues Asn-13, Gln-47, and Asn-67. Cys-76 serves as the catalytic Proton donor. Residues 77–78 (GN), Asn-167, Asn-200, and 218–219 (ER) each bind substrate. Cys-227 functions as the Proton acceptor in the catalytic mechanism. 228-229 (GT) contacts substrate.

This sequence belongs to the diaminopimelate epimerase family. As to quaternary structure, homodimer.

It is found in the cytoplasm. It catalyses the reaction (2S,6S)-2,6-diaminopimelate = meso-2,6-diaminopimelate. The protein operates within amino-acid biosynthesis; L-lysine biosynthesis via DAP pathway; DL-2,6-diaminopimelate from LL-2,6-diaminopimelate: step 1/1. In terms of biological role, catalyzes the stereoinversion of LL-2,6-diaminopimelate (L,L-DAP) to meso-diaminopimelate (meso-DAP), a precursor of L-lysine and an essential component of the bacterial peptidoglycan. The chain is Diaminopimelate epimerase from Burkholderia ambifaria (strain ATCC BAA-244 / DSM 16087 / CCUG 44356 / LMG 19182 / AMMD) (Burkholderia cepacia (strain AMMD)).